The sequence spans 180 residues: MASYLAEEYKETVAPALKEKFNYTSSMQIPKIDKIVLNMGVGDAVSNAKNLDEAVEELTLISGQKPLITKAKKSIANFRLREGMSIGAKVTLRGDRMYDFLYKLINVSLPRVRDFRGVSTRSFDGRGNYTLGIKEQLIFPEIDFDKVNRTRGLDIVIVTTADTDEEARELLSQFGMPFAR.

It belongs to the universal ribosomal protein uL5 family. In terms of assembly, part of the 50S ribosomal subunit; part of the 5S rRNA/L5/L18/L25 subcomplex. Contacts the 5S rRNA and the P site tRNA. Forms a bridge to the 30S subunit in the 70S ribosome.

In terms of biological role, this is one of the proteins that bind and probably mediate the attachment of the 5S RNA into the large ribosomal subunit, where it forms part of the central protuberance. In the 70S ribosome it contacts protein S13 of the 30S subunit (bridge B1b), connecting the 2 subunits; this bridge is implicated in subunit movement. Contacts the P site tRNA; the 5S rRNA and some of its associated proteins might help stabilize positioning of ribosome-bound tRNAs. This chain is Large ribosomal subunit protein uL5, found in Lactobacillus acidophilus (strain ATCC 700396 / NCK56 / N2 / NCFM).